The sequence spans 367 residues: Peptide chain release factor 2 (367 aa).

At glutamine 254 the chain carries N5-methylglutamine.

The protein belongs to the prokaryotic/mitochondrial release factor family. Methylated by PrmC. Methylation increases the termination efficiency of RF2.

It is found in the cytoplasm. Functionally, peptide chain release factor 2 directs the termination of translation in response to the peptide chain termination codons UGA and UAA. This chain is Peptide chain release factor 2, found in Bordetella avium (strain 197N).